A 128-amino-acid polypeptide reads, in one-letter code: Holin-like protein CidA (128 aa).

Helical transmembrane passes span 23-43 (LIVE…IVIF), 58-78 (IGAL…AVGI), and 84-104 (ILAE…FVVM).

The protein belongs to the CidA/LrgA family. CidA subfamily.

Its subcellular location is the cell membrane. Its function is as follows. Increases the activity of extracellular murein hydrolases possibly by mediating their export via hole formation. Inhibited by the antiholin-like proteins LrgAB. In an unstressed cell, the LrgAB products probably inhibit the function of the CidA protein. When a cell is stressed by the addition of antibiotics or by other factors in the environment, CidA possibly oligomerizes within the bacterial cell membrane, creating lesions that disrupt the proton motive force, which in turn results in loss of cell viability. These lesions are also hypothesized to regulate the subsequent cell lysis by either allowing the murein hydrolases access to the cell wall substrate and/or regulating their activity by a possible change in the cell wall pH that results from loss of membrane potential. In Bacillus licheniformis (strain ATCC 14580 / DSM 13 / JCM 2505 / CCUG 7422 / NBRC 12200 / NCIMB 9375 / NCTC 10341 / NRRL NRS-1264 / Gibson 46), this protein is Holin-like protein CidA.